The sequence spans 173 residues: Ribosomal RNA large subunit methyltransferase H (173 aa).

S-adenosyl-L-methionine-binding residues include Leu-89 and Gly-121.

Belongs to the RNA methyltransferase RlmH family. As to quaternary structure, homodimer.

It localises to the cytoplasm. The catalysed reaction is pseudouridine(1915) in 23S rRNA + S-adenosyl-L-methionine = N(3)-methylpseudouridine(1915) in 23S rRNA + S-adenosyl-L-homocysteine + H(+). Its function is as follows. Specifically methylates the pseudouridine at position 1915 (m3Psi1915) in 23S rRNA. The protein is Ribosomal RNA large subunit methyltransferase H of Chelativorans sp. (strain BNC1).